The primary structure comprises 467 residues: Pentatricopeptide repeat-containing protein At1g77170, mitochondrial (467 aa).

A mitochondrion-targeting transit peptide spans 1–30 (MFFSGLISKLHVHGTKRTNHFTIFHRLNHF). PPR repeat units lie at residues 81–115 (IAFL…TVLP), 116–150 (DRYS…GFVG), 151–181 (DEFC…NPER), 182–216 (KLGS…GLEP), 217–251 (DDFT…KTEE), 254–284 (DIMM…MRQR), 285–319 (NVVS…GVRP), 320–350 (NKIT…MKSE), and 356–386 (GLSH…MPMK). The type E motif stretch occupies residues 391-466 (VWGCLMGGCE…IPAYSYASTT (76 aa)).

This sequence belongs to the PPR family. PCMP-E subfamily.

Its subcellular location is the mitochondrion. The chain is Pentatricopeptide repeat-containing protein At1g77170, mitochondrial (PCMP-E21) from Arabidopsis thaliana (Mouse-ear cress).